An 842-amino-acid polypeptide reads, in one-letter code: Taste receptor type 1 member 1 (842 aa).

Residues 1–19 (MLFWAAHLLLSLQLAVAYC) form the signal peptide. Residues 20 to 568 (WAFSCQRTES…EFLGWHEPIS (549 aa)) are Extracellular-facing. Residues Asn-88, Asn-89, Asn-96, Asn-136, Asn-292, Asn-480, and Asn-530 are each glycosylated (N-linked (GlcNAc...) asparagine). The helical transmembrane segment at 569–589 (LVLLAANTLLLLLLIGTAGLF) threads the bilayer. Over 590–604 (AWRLHTPVVRSAGGR) the chain is Cytoplasmic. The helical transmembrane segment at 605–625 (LCFLMLGSLVAGSCSLYSFFG) threads the bilayer. Residues 626–640 (KPTVPACLLRQPLFS) lie on the Extracellular side of the membrane. A helical transmembrane segment spans residues 641-661 (LGFAIFLSCLTIRSFQLVIIF). At 662–681 (KFSTKVPTFYHTWAQNHGAG) the chain is on the cytoplasmic side. Residues 682–702 (IFVIVSSTVHLFLCLTWLAMW) form a helical membrane-spanning segment. Over 703-725 (TPRPTREYQRFPHLVILECTEVN) the chain is Extracellular. A helical transmembrane segment spans residues 726–746 (SVGFLVAFAHNILLSISTFVC). At 747 to 762 (SYLGKELPENYNEAKC) the chain is on the cytoplasmic side. The helical transmembrane segment at 763 to 783 (VTFSLLLHFVSWIAFFTMSSI) threads the bilayer. At 784–789 (YQGSYL) the chain is on the extracellular side. Residues 790–810 (PAVNVLAGLATLSGGFSGYFL) traverse the membrane as a helical segment. Residues 811–842 (PKCYVILCRPELNNTEHFQASIQDYTRRCGTT) lie on the Cytoplasmic side of the membrane.

This sequence belongs to the G-protein coupled receptor 3 family. TAS1R subfamily. Forms heterodimers with TAS1R3. As to expression, expressed strongly only in fungiform papillae.

Its subcellular location is the cell membrane. Putative taste receptor. TAS1R1/TAS1R3 responds to the umami taste stimulus (the taste of monosodium glutamate) and also to most of the 20 standard L-amino acids, but not to their D-enantiomers or other compounds. Sequence differences within and between species can significantly influence the selectivity and specificity of taste responses. The protein is Taste receptor type 1 member 1 (Tas1r1) of Mus musculus (Mouse).